The following is a 674-amino-acid chain: Probable 3',5'-cyclic-AMP phosphodiesterase pde-4 (674 aa).

The disordered stretch occupies residues 1-82 (MPRRRGSSSS…TSSASSYHPP (82 aa)). Residues 15–24 (GGSGGGGGFG) are compositionally biased toward gly residues. Over residues 39 to 62 (RTSSPSASSTSRTPPAALPPRTSA) the composition is skewed to low complexity. Residues 66–78 (PGSNHKLTSSASS) show a composition bias toward polar residues. Residues 328–660 (HVPEYGVNCA…EWYQSRIPEE (333 aa)) form the PDEase domain. Histidine 407 acts as the Proton donor in catalysis. A divalent metal cation contacts are provided by histidine 411, histidine 447, aspartate 448, and aspartate 565.

It belongs to the cyclic nucleotide phosphodiesterase family. A divalent metal cation is required as a cofactor. As to expression, expressed in dorsal D (DD) motor neurons and several other neurons at the L1 stage. Expression in DD neurons decreases gradually beginning in the late L1 stage. Highly expressed in adult ventral D (VD) motor neurons, but diminished in adult DD motor neurons.

It catalyses the reaction 3',5'-cyclic AMP + H2O = AMP + H(+). In terms of biological role, hydrolyzes the second messenger 3',5'-cyclic AMP (cAMP), which is a key regulator of many important physiological processes. Antagonizes dorsal D (DD) motor neuron respecification by reducing levels of cAMP. The sequence is that of Probable 3',5'-cyclic-AMP phosphodiesterase pde-4 (pde-4) from Caenorhabditis elegans.